The chain runs to 341 residues: Glycerol-3-phosphate dehydrogenase [NAD(P)+] 1 (341 aa).

The NADPH site is built by Ser-11, Trp-12, Arg-32, Arg-33, and Lys-106. 3 residues coordinate sn-glycerol 3-phosphate: Lys-106, Gly-137, and Ser-139. Residue Ala-141 participates in NADPH binding. Lys-192, Asp-245, Ser-255, Arg-256, and Asn-257 together coordinate sn-glycerol 3-phosphate. Lys-192 serves as the catalytic Proton acceptor. Arg-256 contributes to the NADPH binding site. Val-280 and Glu-282 together coordinate NADPH.

It belongs to the NAD-dependent glycerol-3-phosphate dehydrogenase family.

The protein localises to the cytoplasm. The catalysed reaction is sn-glycerol 3-phosphate + NAD(+) = dihydroxyacetone phosphate + NADH + H(+). It carries out the reaction sn-glycerol 3-phosphate + NADP(+) = dihydroxyacetone phosphate + NADPH + H(+). Its pathway is membrane lipid metabolism; glycerophospholipid metabolism. Functionally, catalyzes the reduction of the glycolytic intermediate dihydroxyacetone phosphate (DHAP) to sn-glycerol 3-phosphate (G3P), the key precursor for phospholipid synthesis. In Salinibacter ruber (strain DSM 13855 / M31), this protein is Glycerol-3-phosphate dehydrogenase [NAD(P)+] 1.